Reading from the N-terminus, the 612-residue chain is Membrane protein insertase YidC (612 aa).

Transmembrane regions (helical) follow at residues 4-24, 329-349, 358-378, 434-454, 484-504, 524-544, and 546-566; these read NTII…YLNH, LVPL…IPIF, VNLG…LFPL, ILLQ…AIGL, FLGN…ILNT, LTMY…PAGL, and YYYL…RGLV.

The protein belongs to the OXA1/ALB3/YidC family. Type 1 subfamily. In terms of assembly, interacts with the Sec translocase complex via SecD. Specifically interacts with transmembrane segments of nascent integral membrane proteins during membrane integration.

It is found in the cell inner membrane. Required for the insertion and/or proper folding and/or complex formation of integral membrane proteins into the membrane. Involved in integration of membrane proteins that insert both dependently and independently of the Sec translocase complex, as well as at least some lipoproteins. Aids folding of multispanning membrane proteins. This chain is Membrane protein insertase YidC, found in Azobacteroides pseudotrichonymphae genomovar. CFP2.